The sequence spans 427 residues: Flotillin-1 (427 aa).

Residues serine 19, serine 163, and serine 385 each carry the phosphoserine modification. The residue at position 387 (threonine 387) is a Phosphothreonine.

The protein belongs to the band 7/mec-2 family. Flotillin subfamily. Heterooligomeric complex of flotillin-1 and flotillin-2 and caveolin-1 and caveolin-2. Interacts with ECPAS.

The protein localises to the cell membrane. Its subcellular location is the endosome. The protein resides in the membrane. It localises to the caveola. It is found in the melanosome. The protein localises to the membrane raft. May act as a scaffolding protein within caveolar membranes, functionally participating in formation of caveolae or caveolae-like vesicles. This Sus scrofa (Pig) protein is Flotillin-1 (FLOT1).